Consider the following 353-residue polypeptide: MRIEKDKELMNILKIMAPGTPLREGLENILRAKTGGLLILGDSDQILKLVDGGFKINSEYSPSYVYELAKMDGSIVLSSDLKKILCANAQLIPDSSIPTFETGTRHRTADRVAKQTGSIVIAISQRRNIITVYKGGIKYVLRDSSIILARANQALQTLEKYVAVLDRVVNNLNILEFKDIATLFDVVTAIQRSEMVMRIVSEIERYICELGNEGRLIDMQLSELIKSVEEDGILLIRDYCRSNMEYEDIYKQIQGLSSEELLNLDGLSKIIGYTGVPLVDTLISPRGYRMINKIPRIPSNVIENLVANFNQLKCVMEASYEQLDNVEGIGEARAKAIKNGLRRLREQIMLDKV.

In terms of domain architecture, DAC spans 6–144 (DKELMNILKI…GGIKYVLRDS (139 aa)). ATP is bound by residues Gly-73, Leu-91, and 104 to 108 (TRHRT).

This sequence belongs to the DisA family. Homooctamer. Requires Mg(2+) as cofactor.

The catalysed reaction is 2 ATP = 3',3'-c-di-AMP + 2 diphosphate. Its function is as follows. Participates in a DNA-damage check-point that is active prior to asymmetric division when DNA is damaged. DisA forms globular foci that rapidly scan along the chromosomes during sporulation, searching for lesions. When a lesion is present, DisA pauses at the lesion site. This triggers a cellular response that culminates in a temporary block in sporulation initiation. Also has diadenylate cyclase activity, catalyzing the condensation of 2 ATP molecules into cyclic di-AMP (c-di-AMP). c-di-AMP acts as a signaling molecule that couples DNA integrity with progression of sporulation. The rise in c-di-AMP level generated by DisA while scanning the chromosome, operates as a positive signal that advances sporulation; upon encountering a lesion, the DisA focus arrests at the damaged site and halts c-di-AMP synthesis. The protein is DNA integrity scanning protein DisA of Clostridium botulinum (strain Loch Maree / Type A3).